The following is a 186-amino-acid chain: UPF0301 protein Swit_2673 (186 aa).

Belongs to the UPF0301 (AlgH) family.

This chain is UPF0301 protein Swit_2673, found in Rhizorhabdus wittichii (strain DSM 6014 / CCUG 31198 / JCM 15750 / NBRC 105917 / EY 4224 / RW1) (Sphingomonas wittichii).